The sequence spans 462 residues: MKKFPKKLLPIAVLSSIAFSSLASGSVPEASAQEKKKGNQDEIKNVIVLIGDGMGVSYTSAYRYLKDNKKTKVVEPTAFDQYLVGQQTTYPDDPEQNVTDSAAAATAMSAGIKTYNNAIAVDNDGSEAKTVLEAAKEKGKATGLVATSEITHATPASFGSHDHSRKNMNSIADDYFDEMVNGKHKIDVLLGGGKSNFDRKDRNLIKEFKKAGYSYVDDRKDMLKNKDSQVLGLFADGGLPKKIDRTKDIPSLKDMTNTAIKKLNKDKDGFFLMVEGSQIDWAGHDNDIVGAMSEMEDFEQAYKAAIDFAKKDKHTLVVATADHSTGGYSIGADGIYNWFSEPIKAAKRTPDFMAEKIADGADVEKTLKTYIDQKKLALTKAEIQSVEEAAKSKEVLDIDNAIENIFNKRSHTGWTTGGHTGEDVPVYAYGPSSETFAGQIDNTEIAKNVFKALQYNIKINDK.

Positions Met1 to Ala32 are cleaved as a signal peptide. Mg(2+) is bound at residue Asp52. Residue Asp52 coordinates Zn(2+). The Phosphoserine intermediate role is filled by Ser101. Mg(2+) contacts are provided by Thr154 and Glu275. 5 residues coordinate Zn(2+): Asp280, His284, Asp322, His323, and His419.

It belongs to the alkaline phosphatase family. In terms of assembly, monomer. Requires Mg(2+) as cofactor. It depends on Zn(2+) as a cofactor.

It catalyses the reaction a phosphate monoester + H2O = an alcohol + phosphate. The chain is Alkaline phosphatase 3 (phoB) from Bacillus subtilis (strain 168).